Here is an 84-residue protein sequence, read N- to C-terminus: Cytochrome b559 subunit alpha (84 aa).

A helical membrane pass occupies residues 22-36; the sequence is VIHSITIPALFVAGW. H24 is a heme binding site.

Belongs to the PsbE/PsbF family. In terms of assembly, heterodimer of an alpha subunit and a beta subunit. PSII is composed of 1 copy each of membrane proteins PsbA, PsbB, PsbC, PsbD, PsbE, PsbF, PsbH, PsbI, PsbJ, PsbK, PsbL, PsbM, PsbT, PsbX, PsbY, PsbZ, Psb30/Ycf12, at least 3 peripheral proteins of the oxygen-evolving complex and a large number of cofactors. It forms dimeric complexes. Requires heme b as cofactor.

The protein resides in the plastid. The protein localises to the chloroplast thylakoid membrane. This b-type cytochrome is tightly associated with the reaction center of photosystem II (PSII). PSII is a light-driven water:plastoquinone oxidoreductase that uses light energy to abstract electrons from H(2)O, generating O(2) and a proton gradient subsequently used for ATP formation. It consists of a core antenna complex that captures photons, and an electron transfer chain that converts photonic excitation into a charge separation. This is Cytochrome b559 subunit alpha from Porphyra purpurea (Red seaweed).